We begin with the raw amino-acid sequence, 100 residues long: Putative septation protein SpoVG (100 aa).

This sequence belongs to the SpoVG family.

Its function is as follows. Could be involved in septation. This chain is Putative septation protein SpoVG, found in Staphylococcus aureus (strain MRSA252).